Here is a 548-residue protein sequence, read N- to C-terminus: Probable 2,3-bisphosphoglycerate-independent phosphoglycerate mutase (548 aa).

The Mn(2+) site is built by Asp20 and Ser73. Ser73 (phosphoserine intermediate) is an active-site residue. Residues His134, 164-165, Arg200, Arg207, 279-282, and Lys354 each bind substrate; these read RD and RGDR. Mn(2+) contacts are provided by Asp422, His426, Asp463, His464, and His493.

It belongs to the BPG-independent phosphoglycerate mutase family. In terms of assembly, monomer. The cofactor is Mn(2+).

It carries out the reaction (2R)-2-phosphoglycerate = (2R)-3-phosphoglycerate. Its pathway is carbohydrate degradation; glycolysis; pyruvate from D-glyceraldehyde 3-phosphate: step 3/5. In terms of biological role, catalyzes the interconversion of 2-phosphoglycerate and 3-phosphoglycerate. This chain is Probable 2,3-bisphosphoglycerate-independent phosphoglycerate mutase (gpmI), found in Leptospira interrogans serogroup Icterohaemorrhagiae serovar Lai (strain 56601).